The following is a 530-amino-acid chain: Autoinducer-2 kinase (530 aa).

It belongs to the FGGY kinase family.

Its subcellular location is the cytoplasm. It catalyses the reaction (S)-4,5-dihydroxypentane-2,3-dione + ATP = (2S)-2-hydroxy-3,4-dioxopentyl phosphate + ADP + H(+). Functionally, catalyzes the phosphorylation of autoinducer-2 (AI-2) to phospho-AI-2, which subsequently inactivates the transcriptional regulator LsrR and leads to the transcription of the lsr operon. Phosphorylates the ring-open form of (S)-4,5-dihydroxypentane-2,3-dione (DPD), which is the precursor to all AI-2 signaling molecules, at the C5 position. This Yersinia pseudotuberculosis serotype O:1b (strain IP 31758) protein is Autoinducer-2 kinase.